The following is a 351-amino-acid chain: UDP-3-O-acylglucosamine N-acyltransferase (351 aa).

Residue H240 is the Proton acceptor of the active site.

The protein belongs to the transferase hexapeptide repeat family. LpxD subfamily. In terms of assembly, homotrimer.

It carries out the reaction a UDP-3-O-[(3R)-3-hydroxyacyl]-alpha-D-glucosamine + a (3R)-hydroxyacyl-[ACP] = a UDP-2-N,3-O-bis[(3R)-3-hydroxyacyl]-alpha-D-glucosamine + holo-[ACP] + H(+). It participates in bacterial outer membrane biogenesis; LPS lipid A biosynthesis. In terms of biological role, catalyzes the N-acylation of UDP-3-O-acylglucosamine using 3-hydroxyacyl-ACP as the acyl donor. Is involved in the biosynthesis of lipid A, a phosphorylated glycolipid that anchors the lipopolysaccharide to the outer membrane of the cell. In Pseudomonas syringae pv. syringae (strain B728a), this protein is UDP-3-O-acylglucosamine N-acyltransferase.